The sequence spans 96 residues: Myosuppressin (96 aa).

The N-terminal stretch at 1-24 is a signal peptide; it reads MALGNGYYCAVVCVVLACASVVLC. The propeptide occupies 25–80; it reads APAQLCAGAADDDPRAARFCQALNTFLELYAEAAGEQVPEYQALVRDYPQLLDTGM. Position 83 is a pyrrolidone carboxylic acid; partial (Gln83). Phenylalanine amide is present on Phe92. A propeptide is located at residue Arg96.

Belongs to the myosuppressin family. Expressed in corpora cardiaca (CC), corpora allata (CA), antennal lobe (AL) and gnathal ganglion (GNG) (at protein level). In its non-pyroglutamate form, expression in GNG detected in all animals, in AL, CC and in CA in most animals (at protein level). In its pyroglutamate form, expression in CC, CA and GNG detected in all animals, in AL in some animals (at protein level).

It is found in the secreted. Functionally, myoinhibiting neuropeptide. This Agrotis ipsilon (Black cutworm moth) protein is Myosuppressin.